Consider the following 273-residue polypeptide: NADH-ubiquinone oxidoreductase 29.9 kDa subunit, mitochondrial (273 aa).

Residues 1–8 (MRAALRLL) constitute a mitochondrion transit peptide.

This sequence belongs to the complex I NDUFA5 subunit family. In terms of assembly, complex I is composed of about 40 different subunits.

It localises to the mitochondrion inner membrane. Accessory subunit of the mitochondrial membrane respiratory chain NADH dehydrogenase (Complex I), that is believed not to be involved in catalysis. Complex I functions in the transfer of electrons from NADH to the respiratory chain. The immediate electron acceptor for the enzyme is believed to be ubiquinone. This is NADH-ubiquinone oxidoreductase 29.9 kDa subunit, mitochondrial (nuo-32) from Neurospora crassa (strain ATCC 24698 / 74-OR23-1A / CBS 708.71 / DSM 1257 / FGSC 987).